Consider the following 262-residue polypeptide: Mlc titration factor A (262 aa).

The Zn(2+) site is built by H111, H148, H152, and E211.

It belongs to the MtfA family. In terms of assembly, interacts with Mlc. Zn(2+) serves as cofactor.

Its subcellular location is the cytoplasm. Its function is as follows. Involved in the modulation of the activity of the glucose-phosphotransferase system (glucose-PTS). Interacts with the transcriptional repressor Mlc, preventing its interaction with DNA and leading to the modulation of expression of genes regulated by Mlc, including ptsG, which encodes the PTS system glucose-specific EIICB component. Functionally, shows zinc-dependent metallopeptidase activity. In Serratia proteamaculans (strain 568), this protein is Mlc titration factor A.